The chain runs to 363 residues: Aminomethyltransferase (363 aa).

The protein belongs to the GcvT family. The glycine cleavage system is composed of four proteins: P, T, L and H.

The catalysed reaction is N(6)-[(R)-S(8)-aminomethyldihydrolipoyl]-L-lysyl-[protein] + (6S)-5,6,7,8-tetrahydrofolate = N(6)-[(R)-dihydrolipoyl]-L-lysyl-[protein] + (6R)-5,10-methylene-5,6,7,8-tetrahydrofolate + NH4(+). The glycine cleavage system catalyzes the degradation of glycine. This is Aminomethyltransferase from Teredinibacter turnerae (strain ATCC 39867 / T7901).